The chain runs to 208 residues: FMN-dependent NADH:quinone oxidoreductase 1 (208 aa).

This sequence belongs to the azoreductase type 1 family. In terms of assembly, homodimer. Requires FMN as cofactor.

The catalysed reaction is 2 a quinone + NADH + H(+) = 2 a 1,4-benzosemiquinone + NAD(+). It carries out the reaction N,N-dimethyl-1,4-phenylenediamine + anthranilate + 2 NAD(+) = 2-(4-dimethylaminophenyl)diazenylbenzoate + 2 NADH + 2 H(+). Quinone reductase that provides resistance to thiol-specific stress caused by electrophilic quinones. In terms of biological role, also exhibits azoreductase activity. Catalyzes the reductive cleavage of the azo bond in aromatic azo compounds to the corresponding amines. This chain is FMN-dependent NADH:quinone oxidoreductase 1, found in Bacillus thuringiensis subsp. konkukian (strain 97-27).